Reading from the N-terminus, the 476-residue chain is Cysteine--tRNA ligase (476 aa).

C28 contacts Zn(2+). A 'HIGH' region motif is present at residues 30–40 (VTTYDFCHIGH). Residues C215, H241, and E245 each coordinate Zn(2+). Residues 273 to 277 (KMSKS) carry the 'KMSKS' region motif. K276 lines the ATP pocket.

Belongs to the class-I aminoacyl-tRNA synthetase family. In terms of assembly, monomer. The cofactor is Zn(2+).

The protein resides in the cytoplasm. The enzyme catalyses tRNA(Cys) + L-cysteine + ATP = L-cysteinyl-tRNA(Cys) + AMP + diphosphate. The chain is Cysteine--tRNA ligase from Buchnera aphidicola subsp. Cinara cedri (strain Cc).